A 136-amino-acid chain; its full sequence is Small ribosomal subunit protein eS8 (136 aa).

The segment at Met1–Val23 is disordered. The segment covering Thr13–Val23 has biased composition (basic residues).

The protein belongs to the eukaryotic ribosomal protein eS8 family. In terms of assembly, part of the 30S ribosomal subunit.

This is Small ribosomal subunit protein eS8 from Hyperthermus butylicus (strain DSM 5456 / JCM 9403 / PLM1-5).